The chain runs to 418 residues: Tyrosine--tRNA ligase (418 aa).

An L-tyrosine-binding site is contributed by tyrosine 34. Residues 39 to 48 (PTADSLHLGH) carry the 'HIGH' region motif. Residues tyrosine 169 and glutamine 173 each coordinate L-tyrosine. The 'KMSKS' region signature appears at 229–233 (KFGKS). Lysine 232 lines the ATP pocket. Positions 352–418 (LNLVDMLVTA…GKKKYAVLTY (67 aa)) constitute an S4 RNA-binding domain.

Belongs to the class-I aminoacyl-tRNA synthetase family. TyrS type 1 subfamily. In terms of assembly, homodimer.

The protein localises to the cytoplasm. It carries out the reaction tRNA(Tyr) + L-tyrosine + ATP = L-tyrosyl-tRNA(Tyr) + AMP + diphosphate + H(+). Its function is as follows. Catalyzes the attachment of tyrosine to tRNA(Tyr) in a two-step reaction: tyrosine is first activated by ATP to form Tyr-AMP and then transferred to the acceptor end of tRNA(Tyr). The polypeptide is Tyrosine--tRNA ligase (Streptococcus pyogenes serotype M5 (strain Manfredo)).